Consider the following 531-residue polypeptide: Coiled-coil domain-containing protein 9 (531 aa).

Residues 40–531 are disordered; the sequence is EDRKKAELEG…PGEAWPFESV (492 aa). Basic and acidic residues predominate over residues 59-72; that stretch reads RSVEKENVAVESEK. A Phosphoserine modification is found at Ser-80. Thr-95 is modified (phosphothreonine). At Arg-107 the chain carries Omega-N-methylarginine. Ser-111 carries the phosphoserine modification. Residues Arg-121, Arg-128, and Arg-130 each carry the omega-N-methylarginine modification. Asymmetric dimethylarginine occurs at positions 131, 133, and 135. Ser-137 carries the phosphoserine modification. 3 stretches are compositionally biased toward basic and acidic residues: residues 148–185, 194–217, and 227–241; these read ISDR…REGV, FLDD…EESR, and DFER…ERQG. Residues 149–185 adopt a coiled-coil conformation; it reads SDRKSKEWEERRRQNIEKMNEEMEKIAEYERNQREGV. Ser-202 carries the phosphoserine modification. Phosphoserine is present on residues Ser-248 and Ser-255. Composition is skewed to basic and acidic residues over residues 258–279, 289–302, 311–320, and 361–372; these read GRER…QERL, WRRE…DGMF, EPSHRYDDQA, and YSDHDDRWETKE. A phosphoserine mark is found at Ser-376, Ser-386, and Ser-390. Positions 386-395 are enriched in low complexity; that stretch reads SPETSPKETP. The span at 396 to 406 shows a compositional bias: pro residues; it reads MQPPEIPAPAH. Acidic residues predominate over residues 411-446; it reads DEGEENEGEEDEEWEDISEDEEEEEIEVEEGDEEEP. Phosphoserine is present on Ser-521.

Probable component of the exon junction complex (EJC); the association is RNA-dependent.

Functionally, probable component of the exon junction complex (EJC), a multiprotein complex that associates immediately upstream of the exon-exon junction on mRNAs and serves as a positional landmark for the intron exon structure of genes and directs post-transcriptional processes in the cytoplasm such as mRNA export, nonsense-mediated mRNA decay (NMD) or translation. This chain is Coiled-coil domain-containing protein 9, found in Homo sapiens (Human).